The sequence spans 222 residues: Ribosomal RNA small subunit methyltransferase G (222 aa).

Residues Gly-82, Leu-87, 132–133, and Arg-150 contribute to the S-adenosyl-L-methionine site; that span reads AE.

The protein belongs to the methyltransferase superfamily. RNA methyltransferase RsmG family.

It is found in the cytoplasm. Functionally, specifically methylates the N7 position of guanine in position 518 of 16S rRNA. This is Ribosomal RNA small subunit methyltransferase G from Corynebacterium jeikeium (strain K411).